Reading from the N-terminus, the 1025-residue chain is Leucyl-cystinyl aminopeptidase (1025 aa).

Residue Met1 is modified to N-acetylmethionine. Over 1–109 (METFTNDRLQ…DGTCSVPSAR (109 aa)) the chain is Cytoplasmic. A Dileucine internalization motif motif is present at residues 53-54 (LL). Tyr70 carries the post-translational modification Phosphotyrosine. The Dileucine internalization motif signature appears at 76–77 (LL). Phosphoserine; by PKC/PRKCZ; in vitro occurs at positions 80 and 91. The interval 96-101 (RQSPDG) is tankyrase binding. The helical; Signal-anchor for type II membrane protein transmembrane segment at 110–131 (TLVICVFVIVVAVSVIMVIYLL) threads the bilayer. Residues 132–1025 (PRCTFTKEGC…RNLKTLTLWL (894 aa)) lie on the Extracellular side of the membrane. N-linked (GlcNAc...) asparagine glycosylation is found at Asn145, Asn184, Asn215, Asn256, and Asn266. Glu295 lines the substrate pocket. Asn368 and Asn374 each carry an N-linked (GlcNAc...) asparagine glycan. A substrate-binding site is contributed by 428–432 (GAMEN). N-linked (GlcNAc...) asparagine glycosylation occurs at Asn447. Zn(2+) is bound at residue His464. Glu465 (proton acceptor) is an active-site residue. The Zn(2+) site is built by His468 and Glu487. N-linked (GlcNAc...) asparagine glycans are attached at residues Asn525, Asn578, Asn664, Asn682, Asn695, Asn758, Asn834, Asn850, and Asn989.

This sequence belongs to the peptidase M1 family. As to quaternary structure, homodimer. Binds tankyrases 1 and 2. Requires Zn(2+) as cofactor. In terms of processing, N-glycosylated. In terms of tissue distribution, highly expressed in heart, brain, spleen, lung, kidney and white adipose tissue. Detected at lower levels in skeletal muscle and liver.

The protein resides in the cell membrane. Its subcellular location is the endomembrane system. It carries out the reaction Release of an N-terminal amino acid, Cys-|-Xaa-, in which the half-cystine residue is involved in a disulfide loop, notably in oxytocin or vasopressin. Hydrolysis rates on a range of aminoacyl arylamides exceed that for the cystinyl derivative, however.. In terms of biological role, release of an N-terminal amino acid, cleave before cysteine, leucine as well as other amino acids. Degrades peptide hormones such as oxytocin, vasopressin and angiotensin III, and plays a role in maintaining homeostasis during pregnancy. May be involved in the inactivation of neuronal peptides in the brain. Cleaves Met-enkephalin and dynorphin. Binds angiotensin IV and may be the angiotensin IV receptor in the brain. The polypeptide is Leucyl-cystinyl aminopeptidase (Lnpep) (Rattus norvegicus (Rat)).